The chain runs to 200 residues: Holliday junction branch migration complex subunit RuvA (200 aa).

The segment at 1-64 is domain I; sequence MIGHLRGIIV…EDAHTLYGFH (64 aa). The interval 65-143 is domain II; sequence NDHERRLFRA…RWHTNDTPSP (79 aa). Residues 133-152 are disordered; it reads SRWHTNDTPSPEGLRSSNTQ. A flexible linker region spans residues 144 to 148; that stretch reads EGLRS. Residues 149-200 form a domain III region; it reads SNTQPTQDAISALMALGYKPQEAKRAIDAIQKPDLSAETLIRLALKQMVLGT.

Belongs to the RuvA family. As to quaternary structure, homotetramer. Forms an RuvA(8)-RuvB(12)-Holliday junction (HJ) complex. HJ DNA is sandwiched between 2 RuvA tetramers; dsDNA enters through RuvA and exits via RuvB. An RuvB hexamer assembles on each DNA strand where it exits the tetramer. Each RuvB hexamer is contacted by two RuvA subunits (via domain III) on 2 adjacent RuvB subunits; this complex drives branch migration. In the full resolvosome a probable DNA-RuvA(4)-RuvB(12)-RuvC(2) complex forms which resolves the HJ.

Its subcellular location is the cytoplasm. In terms of biological role, the RuvA-RuvB-RuvC complex processes Holliday junction (HJ) DNA during genetic recombination and DNA repair, while the RuvA-RuvB complex plays an important role in the rescue of blocked DNA replication forks via replication fork reversal (RFR). RuvA specifically binds to HJ cruciform DNA, conferring on it an open structure. The RuvB hexamer acts as an ATP-dependent pump, pulling dsDNA into and through the RuvAB complex. HJ branch migration allows RuvC to scan DNA until it finds its consensus sequence, where it cleaves and resolves the cruciform DNA. The protein is Holliday junction branch migration complex subunit RuvA of Coxiella burnetii (strain CbuK_Q154) (Coxiella burnetii (strain Q154)).